We begin with the raw amino-acid sequence, 113 residues long: Iron-sulfur cluster insertion protein ErpA (113 aa).

Residues cysteine 41, cysteine 105, and cysteine 107 each contribute to the iron-sulfur cluster site.

Belongs to the HesB/IscA family. In terms of assembly, homodimer. Iron-sulfur cluster is required as a cofactor.

Required for insertion of 4Fe-4S clusters for at least IspG. In Actinobacillus pleuropneumoniae serotype 5b (strain L20), this protein is Iron-sulfur cluster insertion protein ErpA.